We begin with the raw amino-acid sequence, 750 residues long: Retron Eco8 OLD nuclease (750 aa).

An ATPase domain N-terminus region spans residues 1–173 (MTIESIRVKN…IDLYDWNPIW (173 aa)). 33–37 (NVGKS) serves as a coordination point for ATP. The dimerization domain stretch occupies residues 174 to 260 (KLISNLNSFN…TQSDGTNSNK (87 aa)). Residues 261–390 (FLETLLHLLI…FSDNEARLFF (130 aa)) are ATPase domain C-terminus. Residues 391 to 704 (SEYIVFVEGA…SGWVTTFLNY (314 aa)) are toprim domain. Residues E398, E402, D450, D452, S623, and E641 each contribute to the a divalent metal cation site.

The protein belongs to the class 1 OLD nuclease family. Homodimer. Requires a divalent metal cation as cofactor.

In terms of biological role, probable nuclease member of antiviral defense system retron Eco8, composed of an reverse transcriptase (RT), this nuclease and a non-coding RNA (ncRNA) encoded between them. Expression of retron Eco8 confers protection against bacteriophages T4, T6, T7 and SECphi4, SECphi6 and SECphi18. At multiplicity of infection (MOI) of 0.02 cultures slow growth when infected with SECphi4 but do not collapse, at MOI 2 cultures collapse. When the retron is cloned in another E.coli strain synthesizes msDNA (a branched RNA linked by a 2',5'-phosphodiester bond to a single-stranded DNA). The retron transcript serves as primer and template to the reaction, and codes for the RT. The chain is Retron Eco8 OLD nuclease from Escherichia coli.